A 162-amino-acid chain; its full sequence is Large ribosomal subunit protein uL10 (162 aa).

It belongs to the universal ribosomal protein uL10 family. Part of the ribosomal stalk of the 50S ribosomal subunit. The N-terminus interacts with L11 and the large rRNA to form the base of the stalk. The C-terminus forms an elongated spine to which L12 dimers bind in a sequential fashion forming a multimeric L10(L12)X complex.

Functionally, forms part of the ribosomal stalk, playing a central role in the interaction of the ribosome with GTP-bound translation factors. The polypeptide is Large ribosomal subunit protein uL10 (Vibrio parahaemolyticus serotype O3:K6 (strain RIMD 2210633)).